The sequence spans 1005 residues: Small G protein signaling modulator 2 (1005 aa).

Residues His-34–His-191 form the RUN domain. 2 disordered regions span residues Gln-95 to Ala-121 and His-205 to Glu-236. A phosphoserine mark is found at Ser-402 and Leu-444. The 373-residue stretch at Gly-566–Arg-938 folds into the Rab-GAP TBC domain. Disordered stretches follow at residues Phe-657–Pro-687 and Gly-729–Leu-761. Positions Glu-672–Glu-681 are enriched in basic and acidic residues. Residues Phe-730 to Ser-740 are compositionally biased toward acidic residues.

Belongs to the RUTBC family. In terms of assembly, interacts with RAB4A, RAB11A, RAP1A, RAP1B, RAP2A and RAP2B. No interaction with RAB27A. Interacts with RAB9A. As to expression, widely expressed.

It localises to the cytoplasm. The protein localises to the melanosome. Its function is as follows. Possesses GTPase activator activity towards RAB32, RAB33B and RAB38. Regulates the trafficking of melanogenic enzymes TYR, TYRP1 and DCT/TYRP2 to melanosomes in melanocytes by inactivating RAB32 and RAB38. Inhibits RAB32 and RAB38 activation both directly by promoting their GTPase activity and indirectly by disrupting the RAB9A-HPS4 interaction which is required for RAB32/38 activation. The protein is Small G protein signaling modulator 2 (Sgsm2) of Mus musculus (Mouse).